The sequence spans 749 residues: 5-methyltetrahydropteroyltriglutamate--homocysteine methyltransferase (749 aa).

Residues 15–18 (RELK) and Lys114 each bind 5-methyltetrahydropteroyltri-L-glutamate. Residues 425–427 (IGS) and Glu478 contribute to the L-homocysteine site. L-methionine-binding positions include 425-427 (IGS) and Glu478. Trp555 contacts 5-methyltetrahydropteroyltri-L-glutamate. Residue Asp593 coordinates L-homocysteine. L-methionine is bound at residue Asp593. Glu599 is a 5-methyltetrahydropteroyltri-L-glutamate binding site. His636, Cys638, and Glu660 together coordinate Zn(2+). The Proton donor role is filled by His689. Cys721 contacts Zn(2+).

Belongs to the vitamin-B12 independent methionine synthase family. Requires Zn(2+) as cofactor.

It catalyses the reaction 5-methyltetrahydropteroyltri-L-glutamate + L-homocysteine = tetrahydropteroyltri-L-glutamate + L-methionine. Its pathway is amino-acid biosynthesis; L-methionine biosynthesis via de novo pathway; L-methionine from L-homocysteine (MetE route): step 1/1. In terms of biological role, catalyzes the transfer of a methyl group from 5-methyltetrahydrofolate to homocysteine resulting in methionine formation. This chain is 5-methyltetrahydropteroyltriglutamate--homocysteine methyltransferase, found in Streptococcus suis (strain 05ZYH33).